A 285-amino-acid chain; its full sequence is Protein HEXIM1 (285 aa).

Disordered regions lie at residues 1 to 56 and 132 to 196; these read MSEV…QNPG and LMED…LQKD. The span at 23 to 36 shows a compositional bias: basic and acidic residues; it reads GGWHHPVEREEHPV. A compositionally biased stretch (acidic residues) spans 168–180; the sequence is TDDDLEEEEDEAG. Residues 213-284 are a coiled coil; sequence SKQDLIKEYL…QEGKQVAADS (72 aa).

This sequence belongs to the HEXIM family. Homooligomer and heterooligomer. Core component of the 7SK RNP complex.

The protein localises to the nucleus. It is found in the cytoplasm. Transcriptional regulator which functions as a general RNA polymerase II transcription inhibitor. Core component of the 7SK RNP complex: in cooperation with 7SK snRNA sequesters P-TEFb in a large inactive 7SK snRNP complex preventing RNA polymerase II phosphorylation and subsequent transcriptional elongation. Plays a role in the regulation of DNA virus-mediated innate immune response by assembling into the HDP-RNP complex, a complex that serves as a platform for IRF3 phosphorylation and subsequent innate immune response activation through the cGAS-STING pathway. This Xenopus laevis (African clawed frog) protein is Protein HEXIM1 (hexim1).